Consider the following 161-residue polypeptide: SsrA-binding protein (161 aa).

Belongs to the SmpB family.

The protein resides in the cytoplasm. In terms of biological role, required for rescue of stalled ribosomes mediated by trans-translation. Binds to transfer-messenger RNA (tmRNA), required for stable association of tmRNA with ribosomes. tmRNA and SmpB together mimic tRNA shape, replacing the anticodon stem-loop with SmpB. tmRNA is encoded by the ssrA gene; the 2 termini fold to resemble tRNA(Ala) and it encodes a 'tag peptide', a short internal open reading frame. During trans-translation Ala-aminoacylated tmRNA acts like a tRNA, entering the A-site of stalled ribosomes, displacing the stalled mRNA. The ribosome then switches to translate the ORF on the tmRNA; the nascent peptide is terminated with the 'tag peptide' encoded by the tmRNA and targeted for degradation. The ribosome is freed to recommence translation, which seems to be the essential function of trans-translation. This Mycolicibacterium smegmatis (strain ATCC 700084 / mc(2)155) (Mycobacterium smegmatis) protein is SsrA-binding protein.